A 481-amino-acid polypeptide reads, in one-letter code: ATP synthase subunit beta (481 aa).

An ATP-binding site is contributed by 167–174; that stretch reads GGAGVGKT.

It belongs to the ATPase alpha/beta chains family. F-type ATPases have 2 components, CF(1) - the catalytic core - and CF(0) - the membrane proton channel. CF(1) has five subunits: alpha(3), beta(3), gamma(1), delta(1), epsilon(1). CF(0) has three main subunits: a(1), b(2) and c(9-12). The alpha and beta chains form an alternating ring which encloses part of the gamma chain. CF(1) is attached to CF(0) by a central stalk formed by the gamma and epsilon chains, while a peripheral stalk is formed by the delta and b chains.

The protein localises to the cell membrane. The catalysed reaction is ATP + H2O + 4 H(+)(in) = ADP + phosphate + 5 H(+)(out). Functionally, produces ATP from ADP in the presence of a proton gradient across the membrane. The catalytic sites are hosted primarily by the beta subunits. In Corynebacterium jeikeium (strain K411), this protein is ATP synthase subunit beta.